The following is a 568-amino-acid chain: Acetate--CoA ligase CCL3 (568 aa).

Residues 204–212 (TSGTTASPK), 340–345 (HTYGLS), aspartate 437, 449–452 (IKDR), and lysine 547 each bind ATP. The interval 272-340 (TAKGVYSAIA…MSEKGFKVAH (69 aa)) is SBD1. An SBD2 region spans residues 341–417 (TYGLSETYGP…MRGNAVMKGY (77 aa)).

The protein belongs to the ATP-dependent AMP-binding enzyme family. Mostly expressed in glandular trichomes (lupulin glands) after flowering and in old leaves, and, to a lower extent, in stems, young leaves, cones and flowers.

It is found in the cytoplasm. Its subcellular location is the cytosol. It carries out the reaction acetate + ATP + CoA = acetyl-CoA + AMP + diphosphate. The catalysed reaction is propanoate + ATP + CoA = propanoyl-CoA + AMP + diphosphate. It catalyses the reaction butanoate + ATP + CoA = butanoyl-CoA + AMP + diphosphate. The enzyme catalyses 3-methylbutanoate + ATP + CoA = 3-methylbutanoyl-CoA + AMP + diphosphate. It carries out the reaction pentanoate + ATP + CoA = pentanoyl-CoA + AMP + diphosphate. The catalysed reaction is hexanoate + ATP + CoA = hexanoyl-CoA + AMP + diphosphate. It catalyses the reaction 2-methylpropanoate + ATP + CoA = 2-methylpropanoyl-CoA + AMP + diphosphate. The enzyme catalyses 2-methylbutanoate + ATP + CoA = 2-methylbutanoyl-CoA + AMP + diphosphate. It carries out the reaction 2-methylpentanoate + ATP + CoA = 2-methylpentanoyl-CoA + AMP + diphosphate. The catalysed reaction is 3-methylpentanoate + ATP + CoA = 3-methylpentanoyl-CoA + AMP + diphosphate. It catalyses the reaction 4-methylpentanoate + ATP + CoA = 4-methylpentanoyl-CoA + AMP + diphosphate. The protein operates within secondary metabolite biosynthesis. Involved in the biosynthesis of prenylated phenolics natural products which contribute to the bitter taste of beer and display broad biological activities. Catalyzes the ligation of CoA on propanoate to produce propanoyl-CoA. Can also use 2-methylpropanoate (isobutyric acid), acetate, butanoate, isovalerate, pentanoate, hexanoate, 2-methylbutanoate, 2-methylpentanoate, 3-methylpentanoate and 4-methylpentanoate as substrates with a lower efficiency. Triggers the formation of very short chain acyl-CoAs from the corresponding fatty acids, including acetic acid, propanoic acid, butyric acid and its isomer. The sequence is that of Acetate--CoA ligase CCL3 from Humulus lupulus (European hop).